A 446-amino-acid chain; its full sequence is tRNA-2-methylthio-N(6)-dimethylallyladenosine synthase (446 aa).

The MTTase N-terminal domain maps to 3–120 (QKLFIKTYGC…LPEMVNSVAH (118 aa)). [4Fe-4S] cluster is bound by residues Cys-12, Cys-49, Cys-83, Cys-157, Cys-161, and Cys-164. The Radical SAM core domain maps to 143–375 (SSEGASAFVS…QQRILQFAQD (233 aa)). The TRAM domain maps to 378–442 (RKMVGSTQRI…PNSLRGERVD (65 aa)).

This sequence belongs to the methylthiotransferase family. MiaB subfamily. As to quaternary structure, monomer. Requires [4Fe-4S] cluster as cofactor.

It localises to the cytoplasm. The catalysed reaction is N(6)-dimethylallyladenosine(37) in tRNA + (sulfur carrier)-SH + AH2 + 2 S-adenosyl-L-methionine = 2-methylsulfanyl-N(6)-dimethylallyladenosine(37) in tRNA + (sulfur carrier)-H + 5'-deoxyadenosine + L-methionine + A + S-adenosyl-L-homocysteine + 2 H(+). In terms of biological role, catalyzes the methylthiolation of N6-(dimethylallyl)adenosine (i(6)A), leading to the formation of 2-methylthio-N6-(dimethylallyl)adenosine (ms(2)i(6)A) at position 37 in tRNAs that read codons beginning with uridine. In Hahella chejuensis (strain KCTC 2396), this protein is tRNA-2-methylthio-N(6)-dimethylallyladenosine synthase.